We begin with the raw amino-acid sequence, 459 residues long: LAS seventeen-binding protein 3 (459 aa).

The segment at 219–403 (RPSNGGRGSF…APTSPSTSSP (185 aa)) is disordered. Ser-227 carries the post-translational modification Phosphoserine. Residues 229-242 (DDDEDDYYDDDDYY) are compositionally biased toward acidic residues. Over residues 243–262 (NDIPSSFSSTDASSTRPNTR) the composition is skewed to low complexity. Polar residues predominate over residues 289-300 (YSRNSRLAPTNS). Thr-298 bears the Phosphothreonine mark. 2 positions are modified to phosphoserine: Ser-300 and Ser-303. The span at 340–350 (DEYDDYDDDYE) shows a compositional bias: acidic residues. Basic and acidic residues predominate over residues 351-371 (SGYRRGNGRDRTKDREVDDLS). Residues 372-391 (NRFSKSRISSASTPQTSQGR) show a composition bias toward polar residues. Phosphothreonine is present on Thr-393. Low complexity predominate over residues 393 to 403 (TAPTSPSTSSP). A phosphoserine mark is found at Ser-397, Ser-402, and Ser-416. The region spanning 400–459 (TSSPKAVALYSFAGEESGDLPFRKGDVITILKKSDSQNDWWTGRVNGREGIFPANYVELV) is the SH3 domain.

The protein belongs to the SH3YL1 family. As to quaternary structure, interacts with LAS17. Phosphorylation of Ser-397 is induced 2-fold in response to mating pheromone.

The protein localises to the cytoplasm. The polypeptide is LAS seventeen-binding protein 3 (LSB3) (Saccharomyces cerevisiae (strain YJM789) (Baker's yeast)).